A 227-amino-acid polypeptide reads, in one-letter code: Deoxyribose-phosphate aldolase (227 aa).

Asp96 functions as the Proton donor/acceptor in the catalytic mechanism. The Schiff-base intermediate with acetaldehyde role is filled by Lys158. The Proton donor/acceptor role is filled by Lys187.

The protein belongs to the DeoC/FbaB aldolase family. DeoC type 1 subfamily.

The protein localises to the cytoplasm. The catalysed reaction is 2-deoxy-D-ribose 5-phosphate = D-glyceraldehyde 3-phosphate + acetaldehyde. It participates in carbohydrate degradation; 2-deoxy-D-ribose 1-phosphate degradation; D-glyceraldehyde 3-phosphate and acetaldehyde from 2-deoxy-alpha-D-ribose 1-phosphate: step 2/2. Its function is as follows. Catalyzes a reversible aldol reaction between acetaldehyde and D-glyceraldehyde 3-phosphate to generate 2-deoxy-D-ribose 5-phosphate. This chain is Deoxyribose-phosphate aldolase, found in Desulfotalea psychrophila (strain LSv54 / DSM 12343).